Consider the following 1612-residue polypeptide: Mediator of RNA polymerase II transcription subunit 12 (1612 aa).

2 disordered regions span residues 18-114 and 1514-1547; these read AVYS…PSLS and PVSI…QPAF. Over residues 66-80 the composition is skewed to basic and acidic residues; sequence VLEREPPAKRLKIDV. 2 stretches are compositionally biased toward low complexity: residues 99–114 and 1518–1538; these read SKST…PSLS and PSPA…PTGG.

The protein belongs to the Mediator complex subunit 12 family. Component of the srb8-11 complex, which itself associates with the Mediator complex.

It is found in the nucleus. Component of the srb8-11 complex. The srb8-11 complex is a regulatory module of the Mediator complex which is itself involved in regulation of basal and activated RNA polymerase II-dependent transcription. The srb8-11 complex may be involved in the transcriptional repression of a subset of genes regulated by Mediator. It may inhibit the association of the Mediator complex with RNA polymerase II to form the holoenzyme complex. This chain is Mediator of RNA polymerase II transcription subunit 12 (srb8), found in Neosartorya fischeri (strain ATCC 1020 / DSM 3700 / CBS 544.65 / FGSC A1164 / JCM 1740 / NRRL 181 / WB 181) (Aspergillus fischerianus).